We begin with the raw amino-acid sequence, 371 residues long: Queuine tRNA-ribosyltransferase (371 aa).

D90 acts as the Proton acceptor in catalysis. Substrate-binding positions include D90 to F94, D144, Q189, and G215. The interval G246–N252 is RNA binding. The Nucleophile role is filled by D265. The interval T270–R274 is RNA binding; important for wobble base 34 recognition. Residues C303, C305, C308, and H334 each coordinate Zn(2+).

It belongs to the queuine tRNA-ribosyltransferase family. As to quaternary structure, homodimer. Within each dimer, one monomer is responsible for RNA recognition and catalysis, while the other monomer binds to the replacement base PreQ1. It depends on Zn(2+) as a cofactor.

It carries out the reaction 7-aminomethyl-7-carbaguanine + guanosine(34) in tRNA = 7-aminomethyl-7-carbaguanosine(34) in tRNA + guanine. It functions in the pathway tRNA modification; tRNA-queuosine biosynthesis. In terms of biological role, catalyzes the base-exchange of a guanine (G) residue with the queuine precursor 7-aminomethyl-7-deazaguanine (PreQ1) at position 34 (anticodon wobble position) in tRNAs with GU(N) anticodons (tRNA-Asp, -Asn, -His and -Tyr). Catalysis occurs through a double-displacement mechanism. The nucleophile active site attacks the C1' of nucleotide 34 to detach the guanine base from the RNA, forming a covalent enzyme-RNA intermediate. The proton acceptor active site deprotonates the incoming PreQ1, allowing a nucleophilic attack on the C1' of the ribose to form the product. After dissociation, two additional enzymatic reactions on the tRNA convert PreQ1 to queuine (Q), resulting in the hypermodified nucleoside queuosine (7-(((4,5-cis-dihydroxy-2-cyclopenten-1-yl)amino)methyl)-7-deazaguanosine). The chain is Queuine tRNA-ribosyltransferase from Helicobacter pylori (strain G27).